The primary structure comprises 391 residues: Phosphoglycerate kinase (391 aa).

Substrate contacts are provided by residues 21-23 (DLN), Arg-36, 59-62 (HLGR), Arg-113, and Arg-146. Residues Lys-197, Glu-319, and 345–348 (GGDT) each bind ATP.

It belongs to the phosphoglycerate kinase family. Monomer.

It localises to the cytoplasm. The enzyme catalyses (2R)-3-phosphoglycerate + ATP = (2R)-3-phospho-glyceroyl phosphate + ADP. Its pathway is carbohydrate degradation; glycolysis; pyruvate from D-glyceraldehyde 3-phosphate: step 2/5. This is Phosphoglycerate kinase from Shewanella frigidimarina (strain NCIMB 400).